Consider the following 335-residue polypeptide: Acetyl-coenzyme A carboxylase carboxyl transferase subunit alpha (335 aa).

The 255-residue stretch at 40-294 folds into the CoA carboxyltransferase C-terminal domain; sequence QLETLAARRR…KEAIEKHLNA (255 aa).

This sequence belongs to the AccA family. In terms of assembly, acetyl-CoA carboxylase is a heterohexamer composed of biotin carboxyl carrier protein (AccB), biotin carboxylase (AccC) and two subunits each of ACCase subunit alpha (AccA) and ACCase subunit beta (AccD).

It is found in the cytoplasm. It catalyses the reaction N(6)-carboxybiotinyl-L-lysyl-[protein] + acetyl-CoA = N(6)-biotinyl-L-lysyl-[protein] + malonyl-CoA. It functions in the pathway lipid metabolism; malonyl-CoA biosynthesis; malonyl-CoA from acetyl-CoA: step 1/1. Component of the acetyl coenzyme A carboxylase (ACC) complex. First, biotin carboxylase catalyzes the carboxylation of biotin on its carrier protein (BCCP) and then the CO(2) group is transferred by the carboxyltransferase to acetyl-CoA to form malonyl-CoA. The polypeptide is Acetyl-coenzyme A carboxylase carboxyl transferase subunit alpha (Prochlorococcus marinus (strain MIT 9301)).